The following is a 126-amino-acid chain: Holo-[acyl-carrier-protein] synthase (126 aa).

Positions 8 and 57 each coordinate Mg(2+).

The protein belongs to the P-Pant transferase superfamily. AcpS family. It depends on Mg(2+) as a cofactor.

It is found in the cytoplasm. It catalyses the reaction apo-[ACP] + CoA = holo-[ACP] + adenosine 3',5'-bisphosphate + H(+). Functionally, transfers the 4'-phosphopantetheine moiety from coenzyme A to a Ser of acyl-carrier-protein. The polypeptide is Holo-[acyl-carrier-protein] synthase (Halorhodospira halophila (strain DSM 244 / SL1) (Ectothiorhodospira halophila (strain DSM 244 / SL1))).